A 119-amino-acid polypeptide reads, in one-letter code: Basic phospholipase A2 notexin (119 aa).

Intrachain disulfides connect cysteine 11–cysteine 71, cysteine 27–cysteine 118, cysteine 29–cysteine 45, cysteine 44–cysteine 99, cysteine 51–cysteine 92, cysteine 60–cysteine 85, and cysteine 78–cysteine 90. Residues tyrosine 28, glycine 30, and glycine 32 each coordinate Ca(2+). The active site involves histidine 48. Aspartate 49 is a binding site for Ca(2+). Aspartate 93 is an active-site residue.

The protein belongs to the phospholipase A2 family. Group I subfamily. D49 sub-subfamily. Monomer. It depends on Ca(2+) as a cofactor. Expressed by the venom gland.

The protein localises to the secreted. It catalyses the reaction a 1,2-diacyl-sn-glycero-3-phosphocholine + H2O = a 1-acyl-sn-glycero-3-phosphocholine + a fatty acid + H(+). In terms of biological role, snake venom phospholipase A2 (PLA2) that inhibits neuromuscular transmission by blocking acetylcholine release from the nerve termini. Is directly toxic to skeletal muscle upon local application in vivo (dystrophic effect). Also has direct nephrotoxicity in experimental mice; a single subcutaneous dose (1.38 ug/kg) produces renal tubular and glomerular damage within 24 hours. PLA2 catalyzes the calcium-dependent hydrolysis of the 2-acyl groups in 3-sn-phosphoglycerides. This Notechis scutatus scutatus (Mainland tiger snake) protein is Basic phospholipase A2 notexin.